Consider the following 311-residue polypeptide: MSKILVFGHQNPDSDAIGSSYAFAYLAREAYGLDTEVVALGEPNEETAFVLDYFGVAAPRVITSAKAEGAEQVILTDHNEFQQSVADIAEVEVYGVVDHHRVANFETASPLYMRLEPVGSASSIVYRMFKEHGVEVPKEIAGLMLSGLISDTLLLKSPTTHPTDKVIAPELAELAGVNLEEYGLAMLKAGTNLASKSAEELIDIDAKTFELNGNNVRVAQVNTVDIAEVLERQAEIEAAIEKAIADNGYSDFVLMITDIINSNSEILAIGSNMDKVEAAFNFVLENNHAFLAGAVSRKKQVVPQLTASFSA.

Mn(2+) is bound by residues His9, Asp13, Asp15, Asp77, His99, and Asp151.

This sequence belongs to the PPase class C family. Mn(2+) serves as cofactor.

It is found in the cytoplasm. It carries out the reaction diphosphate + H2O = 2 phosphate + H(+). The polypeptide is Probable manganese-dependent inorganic pyrophosphatase (Streptococcus sanguinis (strain SK36)).